A 58-amino-acid chain; its full sequence is Photosystem II reaction center X protein (58 aa).

The helical transmembrane segment at 27–47 threads the bilayer; sequence IGSFLAAAAFIVVPAASFLIW.

The protein belongs to the PsbX family. Type 2 subfamily. PSII consists of a core antenna complex that captures photons, and an electron transfer chain that converts photonic excitation into a charge separation. PSII forms dimeric complexes.

Its subcellular location is the cellular thylakoid membrane. Involved in the binding and/or turnover of quinones at the Q(B) site of Photosystem II. The sequence is that of Photosystem II reaction center X protein from Prochlorococcus marinus (strain MIT 9211).